Here is a 166-residue protein sequence, read N- to C-terminus: Endoribonuclease YbeY (166 aa).

The Zn(2+) site is built by H132, H136, and H142.

It belongs to the endoribonuclease YbeY family. Zn(2+) serves as cofactor.

Its subcellular location is the cytoplasm. Single strand-specific metallo-endoribonuclease involved in late-stage 70S ribosome quality control and in maturation of the 3' terminus of the 16S rRNA. This is Endoribonuclease YbeY from Clostridium botulinum (strain Loch Maree / Type A3).